Here is a 575-residue protein sequence, read N- to C-terminus: Sulfite reductase [NADPH] hemoprotein beta-component (575 aa).

Cysteine 440, cysteine 446, cysteine 485, and cysteine 489 together coordinate [4Fe-4S] cluster. Residue cysteine 489 participates in siroheme binding.

The protein belongs to the nitrite and sulfite reductase 4Fe-4S domain family. Alpha(8)-beta(8). The alpha component is a flavoprotein, the beta component is a hemoprotein. The cofactor is siroheme. It depends on [4Fe-4S] cluster as a cofactor.

It catalyses the reaction hydrogen sulfide + 3 NADP(+) + 3 H2O = sulfite + 3 NADPH + 4 H(+). It functions in the pathway sulfur metabolism; hydrogen sulfide biosynthesis; hydrogen sulfide from sulfite (NADPH route): step 1/1. In terms of biological role, component of the sulfite reductase complex that catalyzes the 6-electron reduction of sulfite to sulfide. This is one of several activities required for the biosynthesis of L-cysteine from sulfate. This is Sulfite reductase [NADPH] hemoprotein beta-component from Chromohalobacter salexigens (strain ATCC BAA-138 / DSM 3043 / CIP 106854 / NCIMB 13768 / 1H11).